Consider the following 421-residue polypeptide: Medium-chain specific acyl-CoA dehydrogenase, mitochondrial (421 aa).

The transit peptide at 1 to 25 (MAAGFGRCCRVLRSISRFHWRSQHT) directs the protein to the mitochondrion. Position 69 is an N6-acetyllysine; alternate (K69). K69 bears the N6-succinyllysine; alternate mark. 158–167 (YCVTEPGAGS) serves as a coordination point for FAD. An octanoyl-CoA-binding site is contributed by S167. The residue at position 179 (K179) is an N6-succinyllysine. 191–193 (WIT) is a binding site for FAD. N6-acetyllysine; alternate occurs at positions 212, 217, 259, and 271. Residues K212, K217, K259, and K271 each carry the N6-succinyllysine; alternate modification. D278 is a binding site for octanoyl-CoA. K279 is subject to N6-acetyllysine. R281 lines the octanoyl-CoA pocket. K301 carries the N6-acetyllysine modification. FAD-binding positions include 306–308 (RKT) and 316–317 (HQ). At T351 the chain carries Phosphothreonine. FAD is bound by residues 374–378 (QILGG) and 401–405 (EGTSQ). Residue E401 coordinates octanoyl-CoA. Catalysis depends on E401, which acts as the Proton acceptor.

The protein belongs to the acyl-CoA dehydrogenase family. Homotetramer. Interacts with the heterodimeric electron transfer flavoprotein ETF. FAD is required as a cofactor. In terms of processing, acetylated. Could occur at proximity of the cofactor-binding sites and reduce the catalytic activity. Could be deacetylated by SIRT3.

The protein localises to the mitochondrion matrix. It carries out the reaction a medium-chain 2,3-saturated fatty acyl-CoA + oxidized [electron-transfer flavoprotein] + H(+) = a medium-chain (2E)-enoyl-CoA + reduced [electron-transfer flavoprotein]. The enzyme catalyses pentanoyl-CoA + oxidized [electron-transfer flavoprotein] + H(+) = (2E)-pentenoyl-CoA + reduced [electron-transfer flavoprotein]. It catalyses the reaction hexanoyl-CoA + oxidized [electron-transfer flavoprotein] + H(+) = (2E)-hexenoyl-CoA + reduced [electron-transfer flavoprotein]. The catalysed reaction is octanoyl-CoA + oxidized [electron-transfer flavoprotein] + H(+) = (2E)-octenoyl-CoA + reduced [electron-transfer flavoprotein]. It carries out the reaction decanoyl-CoA + oxidized [electron-transfer flavoprotein] + H(+) = (2E)-decenoyl-CoA + reduced [electron-transfer flavoprotein]. The enzyme catalyses dodecanoyl-CoA + oxidized [electron-transfer flavoprotein] + H(+) = (2E)-dodecenoyl-CoA + reduced [electron-transfer flavoprotein]. It catalyses the reaction tetradecanoyl-CoA + oxidized [electron-transfer flavoprotein] + H(+) = (2E)-tetradecenoyl-CoA + reduced [electron-transfer flavoprotein]. The catalysed reaction is oxidized [electron-transfer flavoprotein] + hexadecanoyl-CoA + H(+) = (2E)-hexadecenoyl-CoA + reduced [electron-transfer flavoprotein]. It participates in lipid metabolism; mitochondrial fatty acid beta-oxidation. Functionally, medium-chain specific acyl-CoA dehydrogenase is one of the acyl-CoA dehydrogenases that catalyze the first step of mitochondrial fatty acid beta-oxidation, an aerobic process breaking down fatty acids into acetyl-CoA and allowing the production of energy from fats. The first step of fatty acid beta-oxidation consists in the removal of one hydrogen from C-2 and C-3 of the straight-chain fatty acyl-CoA thioester, resulting in the formation of trans-2-enoyl-CoA. Electron transfer flavoprotein (ETF) is the electron acceptor that transfers electrons to the main mitochondrial respiratory chain via ETF-ubiquinone oxidoreductase (ETF dehydrogenase). Among the different mitochondrial acyl-CoA dehydrogenases, medium-chain specific acyl-CoA dehydrogenase acts specifically on acyl-CoAs with saturated 6 to 12 carbons long primary chains. The chain is Medium-chain specific acyl-CoA dehydrogenase, mitochondrial from Homo sapiens (Human).